Here is a 237-residue protein sequence, read N- to C-terminus: RING-H2 finger protein ATL57 (237 aa).

The chain crosses the membrane as a helical span at residues 51 to 71 (ALTIFILLVALFFMGFFSVYF). The segment at 140–182 (CVICLSDFEEGETVKVIPHCGHVFHVDCVDTWLSSYVTCPLCR) adopts an RING-type; atypical zinc-finger fold.

Belongs to the RING-type zinc finger family. ATL subfamily.

The protein resides in the membrane. The enzyme catalyses S-ubiquitinyl-[E2 ubiquitin-conjugating enzyme]-L-cysteine + [acceptor protein]-L-lysine = [E2 ubiquitin-conjugating enzyme]-L-cysteine + N(6)-ubiquitinyl-[acceptor protein]-L-lysine.. The protein operates within protein modification; protein ubiquitination. In Arabidopsis thaliana (Mouse-ear cress), this protein is RING-H2 finger protein ATL57 (ATL57).